A 132-amino-acid chain; its full sequence is Agouti-signaling protein (132 aa).

An N-terminal signal peptide occupies residues 1–22; it reads MDVTRLLLATLLVFLCFFTVYS. Residue Asn39 is glycosylated (N-linked (GlcNAc...) asparagine). Positions 61-87 are disordered; that stretch reads HISRKEAEKKRSSKKEASMKKVARPRT. Over residues 64-79 the composition is skewed to basic and acidic residues; sequence RKEAEKKRSSKKEASM. 5 disulfides stabilise this stretch: Cys93–Cys108, Cys100–Cys114, Cys107–Cys125, Cys111–Cys132, and Cys116–Cys123. The region spanning 93–132 is the Agouti domain; that stretch reads CVATRDSCKPPAPACCDPCASCQCRFFRSACSCRVLSLNC.

The protein resides in the secreted. Its function is as follows. Involved in the regulation of melanogenesis. The binding of ASP to MC1R precludes alpha-MSH initiated signaling and thus blocks production of cAMP, leading to a down-regulation of eumelanogenesis (brown/black pigment) and thus increasing synthesis of pheomelanin (yellow/red pigment). This Colobus polykomos (Western black-and-white colobus monkey) protein is Agouti-signaling protein (ASIP).